Reading from the N-terminus, the 1058-residue chain is Carbamoyl phosphate synthase large chain (1058 aa).

A carboxyphosphate synthetic domain region spans residues 1–401 (MAKRTDIKKI…CLLKACRSLE (401 aa)). 12 residues coordinate ATP: Arg129, Arg169, Gly175, Gly176, Arg208, Ile210, Glu215, Gly241, Ile242, His243, Gln284, and Glu298. The region spanning 133 to 327 (KQLMKELGEP…IAKIAAKIAV (195 aa)) is the ATP-grasp 1 domain. Mg(2+)-binding residues include Gln284, Glu298, and Asn300. The Mn(2+) site is built by Gln284, Glu298, and Asn300. Residues 402–546 (IGVDHNELKG…YSTYEWENES (145 aa)) are oligomerization domain. Residues 547 to 929 (IKSEKESVIV…ALYKAFEASY (383 aa)) form a carbamoyl phosphate synthetic domain region. Residues 671–861 (EKALKDLGIP…MAQVATKLIL (191 aa)) enclose the ATP-grasp 2 domain. 10 residues coordinate ATP: Arg707, Ser746, Ile748, Glu752, Gly777, Val778, His779, Ser780, Gln820, and Glu832. Gln820, Glu832, and Asn834 together coordinate Mg(2+). Mn(2+) contacts are provided by Gln820, Glu832, and Asn834. The MGS-like domain occupies 930 to 1058 (LHMPEYGTIV…ESRTFSIEAI (129 aa)). Residues 930-1058 (LHMPEYGTIV…ESRTFSIEAI (129 aa)) are allosteric domain.

It belongs to the CarB family. As to quaternary structure, composed of two chains; the small (or glutamine) chain promotes the hydrolysis of glutamine to ammonia, which is used by the large (or ammonia) chain to synthesize carbamoyl phosphate. Tetramer of heterodimers (alpha,beta)4. It depends on Mg(2+) as a cofactor. Mn(2+) is required as a cofactor.

It catalyses the reaction hydrogencarbonate + L-glutamine + 2 ATP + H2O = carbamoyl phosphate + L-glutamate + 2 ADP + phosphate + 2 H(+). It carries out the reaction hydrogencarbonate + NH4(+) + 2 ATP = carbamoyl phosphate + 2 ADP + phosphate + 2 H(+). The protein operates within amino-acid biosynthesis; L-arginine biosynthesis; carbamoyl phosphate from bicarbonate: step 1/1. Its pathway is pyrimidine metabolism; UMP biosynthesis via de novo pathway; (S)-dihydroorotate from bicarbonate: step 1/3. In terms of biological role, large subunit of the glutamine-dependent carbamoyl phosphate synthetase (CPSase). CPSase catalyzes the formation of carbamoyl phosphate from the ammonia moiety of glutamine, carbonate, and phosphate donated by ATP, constituting the first step of 2 biosynthetic pathways, one leading to arginine and/or urea and the other to pyrimidine nucleotides. The large subunit (synthetase) binds the substrates ammonia (free or transferred from glutamine from the small subunit), hydrogencarbonate and ATP and carries out an ATP-coupled ligase reaction, activating hydrogencarbonate by forming carboxy phosphate which reacts with ammonia to form carbamoyl phosphate. The polypeptide is Carbamoyl phosphate synthase large chain (Streptococcus equi subsp. zooepidemicus (strain H70)).